The sequence spans 989 residues: R3H domain-containing protein 2 (989 aa).

2 disordered regions span residues 23 to 71 (EESV…AKSN) and 106 to 147 (SCPS…QEYT). Basic and acidic residues predominate over residues 36 to 56 (PSKEEIEKESEDTSLRQETQR). At S37 the chain carries Phosphoserine. Residues 58–71 (TSNHGHARKRAKSN) are compositionally biased toward basic residues. The span at 109 to 143 (SDKEEEKSTKDVSEKEDKDKNKEKVPRRMLSRDSS) shows a compositional bias: basic and acidic residues. S143 bears the Phosphoserine mark. The R3H domain occupies 169–232 (RMMLLKLEQE…AVIINKTSNT (64 aa)). The SUZ domain occupies 233–303 (RIPEQRFSEH…VRERIFARET (71 aa)). Disordered regions lie at residues 267-288 (DDNQIRVPLQDGRRSKSIEERE), 306-390 (NGYL…ISRP), 416-479 (TAQQ…FQPP), 493-524 (ASTGQPLPTSNYSTSSHAPPTQQVLPPQGYMQ), 674-738 (GTSP…PSMV), 751-793 (RGQK…SLSN), and 848-867 (QGQSGLKHGNRSKRQALKSA). Residues 277–288 (DGRRSKSIEERE) are compositionally biased toward basic and acidic residues. Positions 320-331 (SRTSSSRQSSTD) are enriched in low complexity. Phosphoserine occurs at positions 344, 347, and 363. A compositionally biased stretch (low complexity) spans 416-428 (TAQQQQQQQQQLP). 2 stretches are compositionally biased toward polar residues: residues 454–466 (PFGQMSLSRQGST) and 493–517 (ASTGQPLPTSNYSTSSHAPPTQQVL). Residues 695 to 704 (SPSPCSPPQM) are compositionally biased toward pro residues. The segment covering 705 to 727 (PQQYSGVSPSGPGVVVMQLNVPN) has biased composition (low complexity). The segment covering 761–771 (PESSPQANTQM) has biased composition (polar residues). Positions 772–790 (SSSPVTSPTQSPAPSPVTS) are enriched in low complexity. Phosphoserine is present on residues S866 and S868. Phosphothreonine occurs at positions 869 and 873.

The protein localises to the nucleus. The protein is R3H domain-containing protein 2 (R3HDM2) of Bos taurus (Bovine).